A 514-amino-acid polypeptide reads, in one-letter code: Na(+)/H(+) antiporter NhaB (514 aa).

Transmembrane regions (helical) follow at residues 21-41, 43-63, 88-108, 143-163, 203-223, 239-259, 304-324, 349-369, 390-410, 448-468, and 484-504; these read LAIV…SPFI, GWLL…CYPL, IMAN…IFFM, FLDA…FYGV, LMMH…VGEP, FFLR…LTCF, ALIA…VGLI, QESL…AVII, LALF…VFVA, ATPN…SPLI, and IVLS…ATIW.

The protein belongs to the NhaB Na(+)/H(+) (TC 2.A.34) antiporter family.

The protein localises to the cell inner membrane. The enzyme catalyses 2 Na(+)(in) + 3 H(+)(out) = 2 Na(+)(out) + 3 H(+)(in). In terms of biological role, na(+)/H(+) antiporter that extrudes sodium in exchange for external protons. The sequence is that of Na(+)/H(+) antiporter NhaB from Haemophilus influenzae (strain ATCC 51907 / DSM 11121 / KW20 / Rd).